The primary structure comprises 372 residues: Glutamate 5-kinase (372 aa).

Residue Lys-14 coordinates ATP. Residues Ser-54, Asp-141, and Asn-153 each contribute to the substrate site. Thr-173–Asp-174 lines the ATP pocket. In terms of domain architecture, PUA spans Arg-280–Met-358.

Belongs to the glutamate 5-kinase family.

The protein resides in the cytoplasm. The enzyme catalyses L-glutamate + ATP = L-glutamyl 5-phosphate + ADP. It participates in amino-acid biosynthesis; L-proline biosynthesis; L-glutamate 5-semialdehyde from L-glutamate: step 1/2. In terms of biological role, catalyzes the transfer of a phosphate group to glutamate to form L-glutamate 5-phosphate. The chain is Glutamate 5-kinase from Burkholderia ambifaria (strain ATCC BAA-244 / DSM 16087 / CCUG 44356 / LMG 19182 / AMMD) (Burkholderia cepacia (strain AMMD)).